A 198-amino-acid polypeptide reads, in one-letter code: Nucleoid occlusion factor SlmA (198 aa).

One can recognise an HTH tetR-type domain in the interval 10–70 (NRREEILQSL…SLIEFIEDSL (61 aa)). The H-T-H motif DNA-binding region spans 33–52 (TTAKLAASVGVSEAALYRHF). The stretch at 117-144 (EQDRLQGRINQLFERIEAQLRQVLREKR) forms a coiled coil.

Belongs to the nucleoid occlusion factor SlmA family. As to quaternary structure, homodimer. Interacts with FtsZ.

The protein localises to the cytoplasm. It localises to the nucleoid. In terms of biological role, required for nucleoid occlusion (NO) phenomenon, which prevents Z-ring formation and cell division over the nucleoid. Acts as a DNA-associated cell division inhibitor that binds simultaneously chromosomal DNA and FtsZ, and disrupts the assembly of FtsZ polymers. SlmA-DNA-binding sequences (SBS) are dispersed on non-Ter regions of the chromosome, preventing FtsZ polymerization at these regions. The polypeptide is Nucleoid occlusion factor SlmA (Citrobacter koseri (strain ATCC BAA-895 / CDC 4225-83 / SGSC4696)).